The following is a 725-amino-acid chain: Aminopeptidase RNPEPL1 (725 aa).

Residue 326–330 participates in substrate binding; that stretch reads VAMEN. H353 is a binding site for Zn(2+). The active-site Proton acceptor is the E354. Zn(2+)-binding residues include H357 and E376. Residues 676–699 are disordered; that stretch reads GLGSSTEPASEPSTELGKAEADTD. Positions 679 to 690 are enriched in low complexity; that stretch reads SSTEPASEPSTE.

It belongs to the peptidase M1 family. It depends on Zn(2+) as a cofactor. Ubiquitously expressed. Expressed at relatively higher levels in heart and skeletal muscle.

It catalyses the reaction Release of N-terminal amino acids, preferentially methionine, from peptides and arylamides.. Inhibited by calcium but not affected by chloride ions. Inhibited by amastatin and to a lower extent by bestatin. Weakly inhibited by puromycin. Its function is as follows. Broad specificity aminopeptidase which preferentially hydrolyzes an N-terminal methionine, citrulline or glutamine. The chain is Aminopeptidase RNPEPL1 from Homo sapiens (Human).